Reading from the N-terminus, the 393-residue chain is Epoxyqueuosine reductase (393 aa).

Asp154 functions as the Proton donor in the catalytic mechanism. Positions Leu196–Thr228 constitute a 4Fe-4S ferredoxin-type domain. Positions 208, 211, 214, 218, 234, 261, 264, and 268 each coordinate [4Fe-4S] cluster.

Belongs to the QueG family. Monomer. It depends on cob(II)alamin as a cofactor. The cofactor is [4Fe-4S] cluster.

The protein localises to the cytoplasm. The catalysed reaction is epoxyqueuosine(34) in tRNA + AH2 = queuosine(34) in tRNA + A + H2O. The protein operates within tRNA modification; tRNA-queuosine biosynthesis. Catalyzes the conversion of epoxyqueuosine (oQ) to queuosine (Q), which is a hypermodified base found in the wobble positions of tRNA(Asp), tRNA(Asn), tRNA(His) and tRNA(Tyr). The protein is Epoxyqueuosine reductase of Shewanella oneidensis (strain ATCC 700550 / JCM 31522 / CIP 106686 / LMG 19005 / NCIMB 14063 / MR-1).